We begin with the raw amino-acid sequence, 546 residues long: Chaperonin GroEL (546 aa).

Residues 30–33, K51, 87–91, G415, 479–481, and D495 contribute to the ATP site; these read TLGP, DGTTT, and NAA.

It belongs to the chaperonin (HSP60) family. Forms a cylinder of 14 subunits composed of two heptameric rings stacked back-to-back. Interacts with the co-chaperonin GroES.

The protein resides in the cytoplasm. It catalyses the reaction ATP + H2O + a folded polypeptide = ADP + phosphate + an unfolded polypeptide.. Its function is as follows. Together with its co-chaperonin GroES, plays an essential role in assisting protein folding. The GroEL-GroES system forms a nano-cage that allows encapsulation of the non-native substrate proteins and provides a physical environment optimized to promote and accelerate protein folding. The sequence is that of Chaperonin GroEL from Allochromatium vinosum (Chromatium vinosum).